We begin with the raw amino-acid sequence, 437 residues long: RNA-binding motif, single-stranded-interacting protein 3 (437 aa).

Residues 28-57 (YAPAPHPMAPPSPSTNSSSNNSSNNSSGEQ) form a disordered region. Residues 31 to 40 (APHPMAPPSP) are compositionally biased toward pro residues. A compositionally biased stretch (low complexity) spans 41-54 (STNSSSNNSSNNSS). RRM domains lie at 61-134 (TNLY…MAKQ) and 140-225 (TNLY…FADG). Over residues 399 to 422 (TSPQTVAPSSQDTSGQQQQIAVDT) the composition is skewed to polar residues. Residues 399-437 (TSPQTVAPSSQDTSGQQQQIAVDTSNEHAPAYSYQQSKP) are disordered.

Expressed in fetal brain, fetal lung, fetal liver, heart, brain, placenta, lung, liver, muscle, kidney and pancreas.

The protein localises to the cytoplasm. Functionally, binds poly(A) and poly(U) oligoribonucleotides. The polypeptide is RNA-binding motif, single-stranded-interacting protein 3 (RBMS3) (Homo sapiens (Human)).